The following is a 206-amino-acid chain: Ribonuclease M5 (206 aa).

Residues 8–91 form the Toprim domain; sequence NEVIVVEGRD…AFLNRDEARP (84 aa). 3 residues coordinate Mg(2+): glutamate 14, aspartate 60, and aspartate 62.

The protein belongs to the ribonuclease M5 family. The cofactor is Mg(2+).

Its subcellular location is the cytoplasm. It carries out the reaction Endonucleolytic cleavage of RNA, removing 21 and 42 nucleotides, respectively, from the 5'- and 3'-termini of a 5S-rRNA precursor.. Its function is as follows. Required for correct processing of both the 5' and 3' ends of 5S rRNA precursor. Cleaves both sides of a double-stranded region yielding mature 5S rRNA in one step. The chain is Ribonuclease M5 from Lactococcus lactis subsp. lactis (strain IL1403) (Streptococcus lactis).